A 384-amino-acid polypeptide reads, in one-letter code: Anhydro-N-acetylmuramic acid kinase (384 aa).

9–16 is an ATP binding site; sequence GTSYDAID.

It belongs to the anhydro-N-acetylmuramic acid kinase family.

It catalyses the reaction 1,6-anhydro-N-acetyl-beta-muramate + ATP + H2O = N-acetyl-D-muramate 6-phosphate + ADP + H(+). It functions in the pathway amino-sugar metabolism; 1,6-anhydro-N-acetylmuramate degradation. It participates in cell wall biogenesis; peptidoglycan recycling. Its function is as follows. Catalyzes the specific phosphorylation of 1,6-anhydro-N-acetylmuramic acid (anhMurNAc) with the simultaneous cleavage of the 1,6-anhydro ring, generating MurNAc-6-P. Is required for the utilization of anhMurNAc either imported from the medium or derived from its own cell wall murein, and thus plays a role in cell wall recycling. This chain is Anhydro-N-acetylmuramic acid kinase, found in Streptomyces avermitilis (strain ATCC 31267 / DSM 46492 / JCM 5070 / NBRC 14893 / NCIMB 12804 / NRRL 8165 / MA-4680).